The sequence spans 484 residues: tRNA sulfurtransferase (484 aa).

The THUMP domain maps to 61-165; it reads TLLVELLGRI…NDKMMLIKAR (105 aa). ATP-binding positions include 183 to 184, Lys265, Gly287, and Gln296; that span reads LI. Cys344 and Cys456 are oxidised to a cystine. The Rhodanese domain occupies 404-484; the sequence is LSANEVILDI…DNVKVLNKIS (81 aa). Cys456 serves as the catalytic Cysteine persulfide intermediate.

The protein belongs to the ThiI family.

The protein resides in the cytoplasm. It carries out the reaction [ThiI sulfur-carrier protein]-S-sulfanyl-L-cysteine + a uridine in tRNA + 2 reduced [2Fe-2S]-[ferredoxin] + ATP + H(+) = [ThiI sulfur-carrier protein]-L-cysteine + a 4-thiouridine in tRNA + 2 oxidized [2Fe-2S]-[ferredoxin] + AMP + diphosphate. The enzyme catalyses [ThiS sulfur-carrier protein]-C-terminal Gly-Gly-AMP + S-sulfanyl-L-cysteinyl-[cysteine desulfurase] + AH2 = [ThiS sulfur-carrier protein]-C-terminal-Gly-aminoethanethioate + L-cysteinyl-[cysteine desulfurase] + A + AMP + 2 H(+). The protein operates within cofactor biosynthesis; thiamine diphosphate biosynthesis. Its function is as follows. Catalyzes the ATP-dependent transfer of a sulfur to tRNA to produce 4-thiouridine in position 8 of tRNAs, which functions as a near-UV photosensor. Also catalyzes the transfer of sulfur to the sulfur carrier protein ThiS, forming ThiS-thiocarboxylate. This is a step in the synthesis of thiazole, in the thiamine biosynthesis pathway. The sulfur is donated as persulfide by IscS. This chain is tRNA sulfurtransferase, found in Histophilus somni (strain 2336) (Haemophilus somnus).